We begin with the raw amino-acid sequence, 297 residues long: Small ribosomal subunit protein uS2 (297 aa).

Residues 263 to 289 show a composition bias toward low complexity; that stretch reads AAPTSWEADGGDWAASSAAPAGESWAE. Residues 263–297 form a disordered region; it reads AAPTSWEADGGDWAASSAAPAGESWAETQPAEAKW.

The protein belongs to the universal ribosomal protein uS2 family. In terms of assembly, component of the small ribosomal subunit. Mature ribosomes consist of a small (40S) and a large (60S) subunit. The 40S subunit contains about 33 different proteins and 1 molecule of RNA (18S). The 60S subunit contains about 49 different proteins and 3 molecules of RNA (25S, 5.8S and 5S). Interacts with rps21.

It is found in the cytoplasm. In terms of biological role, required for the assembly and/or stability of the 40S ribosomal subunit. Required for the processing of the 20S rRNA-precursor to mature 18S rRNA in a late step of the maturation of 40S ribosomal subunits. The sequence is that of Small ribosomal subunit protein uS2 (rps0) from Neosartorya fischeri (strain ATCC 1020 / DSM 3700 / CBS 544.65 / FGSC A1164 / JCM 1740 / NRRL 181 / WB 181) (Aspergillus fischerianus).